The primary structure comprises 150 residues: MGLEKSFILFSLLVLVLGWVQPSLGRKPSVQDFKRQHMDPGSPPNSRPTICNQMMKRRGITKDSCKPVNTFLHESGQRVQAICSQRQMTCKTSSRKNCHKSSSTLHITDCNLKGSSKYPNCDYTTTNRQKHIIIACEGNPLVPVHYDASV.

Residues Met-1 to Gly-25 form the signal peptide. A substrate-binding site is contributed by Arg-35. The Proton acceptor role is filled by His-37. 4 disulfides stabilise this stretch: Cys-51-Cys-110, Cys-65-Cys-121, Cys-83-Cys-136, and Cys-90-Cys-98. Substrate contacts are provided by residues Lys-66–Thr-70 and Lys-91. His-145 functions as the Proton donor in the catalytic mechanism.

Belongs to the pancreatic ribonuclease family. Monomer.

It is found in the secreted. It catalyses the reaction an [RNA] containing cytidine + H2O = an [RNA]-3'-cytidine-3'-phosphate + a 5'-hydroxy-ribonucleotide-3'-[RNA].. It carries out the reaction an [RNA] containing uridine + H2O = an [RNA]-3'-uridine-3'-phosphate + a 5'-hydroxy-ribonucleotide-3'-[RNA].. Endonuclease that catalyzes the cleavage of RNA on the 3' side of pyrimidine nucleotides. Acts on single-stranded and double-stranded RNA. This Rattus tiomanicus (Malayan field rat) protein is Ribonuclease pancreatic delta-type.